The following is a 151-amino-acid chain: UPF0756 membrane protein LBA0919 (151 aa).

4 consecutive transmembrane segments (helical) span residues 4 to 24, 52 to 72, 78 to 98, and 115 to 135; these read WLFLALILVVALLGKNMSLII, WGVTIISVAILIPIATGQIGF, TFKTPAGWIAILAGIAVAVLS, and LVLGTIIGVVAFKGVAAGPVI.

This sequence belongs to the UPF0756 family.

It localises to the cell membrane. This Lactobacillus acidophilus (strain ATCC 700396 / NCK56 / N2 / NCFM) protein is UPF0756 membrane protein LBA0919.